A 440-amino-acid chain; its full sequence is Histidinol dehydrogenase (440 aa).

Tyr-136, Gln-197, and Asn-220 together coordinate NAD(+). Positions 243, 265, and 268 each coordinate substrate. Positions 265 and 268 each coordinate Zn(2+). Catalysis depends on proton acceptor residues Glu-333 and His-334. Positions 334, 367, 421, and 426 each coordinate substrate. Asp-367 is a binding site for Zn(2+). His-426 contributes to the Zn(2+) binding site.

This sequence belongs to the histidinol dehydrogenase family. The cofactor is Zn(2+).

It catalyses the reaction L-histidinol + 2 NAD(+) + H2O = L-histidine + 2 NADH + 3 H(+). Its pathway is amino-acid biosynthesis; L-histidine biosynthesis; L-histidine from 5-phospho-alpha-D-ribose 1-diphosphate: step 9/9. Functionally, catalyzes the sequential NAD-dependent oxidations of L-histidinol to L-histidinaldehyde and then to L-histidine. This is Histidinol dehydrogenase from Pseudomonas aeruginosa (strain ATCC 15692 / DSM 22644 / CIP 104116 / JCM 14847 / LMG 12228 / 1C / PRS 101 / PAO1).